Consider the following 437-residue polypeptide: GTPase Der (437 aa).

2 EngA-type G domains span residues 3 to 168 (PLIA…PETE) and 178 to 353 (IQLA…QNRS). GTP is bound by residues 9-16 (GRPNVGKS), 56-60 (DTGGY), 120-123 (NKVE), 184-191 (GRPNVGKS), 231-235 (DTAGL), and 296-299 (NKWD). Residues 354–437 (RKISTSVLNK…VPISMRFMQK (84 aa)) form the KH-like domain.

It belongs to the TRAFAC class TrmE-Era-EngA-EngB-Septin-like GTPase superfamily. EngA (Der) GTPase family. As to quaternary structure, associates with the 50S ribosomal subunit.

Functionally, GTPase that plays an essential role in the late steps of ribosome biogenesis. The sequence is that of GTPase Der from Pelodictyon phaeoclathratiforme (strain DSM 5477 / BU-1).